Here is a 976-residue protein sequence, read N- to C-terminus: Probable alanine--tRNA ligase, chloroplastic/mitochondrial (976 aa).

The N-terminal 54 residues, 1 to 54, are a transit peptide targeting the chloroplast and mitochondrion; the sequence is MPRPGFAHATAPALAHARARISPVARRRVVVMRTRVDGAAKSLVTQLRLALGST. Positions 71–95 are disordered; it reads LGTATNDQSTGTRANPNAEGKDNSG. The span at 73–85 shows a compositional bias: polar residues; the sequence is TATNDQSTGTRAN.

It belongs to the class-II aminoacyl-tRNA synthetase family. In terms of assembly, monomer. Requires Zn(2+) as cofactor.

It localises to the plastid. The protein resides in the chloroplast. Its subcellular location is the mitochondrion. It carries out the reaction tRNA(Ala) + L-alanine + ATP = L-alanyl-tRNA(Ala) + AMP + diphosphate. In terms of biological role, catalyzes the attachment of alanine to tRNA(Ala) in a two-step reaction: alanine is first activated by ATP to form Ala-AMP and then transferred to the acceptor end of tRNA(Ala). Also edits incorrectly charged tRNA(Ala) via its editing domain. The chain is Probable alanine--tRNA ligase, chloroplastic/mitochondrial from Ostreococcus tauri.